We begin with the raw amino-acid sequence, 690 residues long: Elongation factor G (690 aa).

The tr-type G domain maps to 8–283 (SKCRNIGIMA…AVVDYLPSPN (276 aa)). Residues 17–24 (AHIDAGKT), 81–85 (DTPGH), and 135–138 (NKMD) contribute to the GTP site.

This sequence belongs to the TRAFAC class translation factor GTPase superfamily. Classic translation factor GTPase family. EF-G/EF-2 subfamily.

It localises to the cytoplasm. Its function is as follows. Catalyzes the GTP-dependent ribosomal translocation step during translation elongation. During this step, the ribosome changes from the pre-translocational (PRE) to the post-translocational (POST) state as the newly formed A-site-bound peptidyl-tRNA and P-site-bound deacylated tRNA move to the P and E sites, respectively. Catalyzes the coordinated movement of the two tRNA molecules, the mRNA and conformational changes in the ribosome. In Anaplasma phagocytophilum (strain HZ), this protein is Elongation factor G.